The sequence spans 348 residues: Probable tRNA pseudouridine synthase B (348 aa).

Aspartate 93 functions as the Nucleophile in the catalytic mechanism. In terms of domain architecture, PUA spans 260–335; that stretch reads LKKIYILDSA…IAVDIERVFM (76 aa).

This sequence belongs to the pseudouridine synthase TruB family. Type 2 subfamily.

It carries out the reaction uridine(55) in tRNA = pseudouridine(55) in tRNA. Functionally, could be responsible for synthesis of pseudouridine from uracil-55 in the psi GC loop of transfer RNAs. This chain is Probable tRNA pseudouridine synthase B, found in Nanoarchaeum equitans (strain Kin4-M).